A 605-amino-acid polypeptide reads, in one-letter code: Leucine aminopeptidase (605 aa).

A peptide contacts are provided by K374, D379, and K386. The Zn(2+) site is built by K374 and D379. Positions 384-401 are L13 loop; that stretch reads NLKAAPGSMIDLMKFDMS. Residue K386 is part of the active site. Zn(2+) contacts are provided by D394, M396, D399, D459, and E461. The a peptide site is built by D399 and D459. R463 is a catalytic residue.

Belongs to the peptidase M17 family. Homohexamer composed of dimer of trimers. Both the identity and concentration of metal ions available dictate the extent to which oligomerization occurs; Mn(2+) and Co(2+) induces oligomerization, whereas Mg(2+) has no effect, and Zn(2+) causes irreversible protein aggregation in vitro. The cofactor is Zn(2+).

The protein resides in the cytoplasm. The enzyme catalyses Release of an N-terminal amino acid, Xaa-|-Yaa-, in which Xaa is preferably Leu, but may be other amino acids including Pro although not Arg or Lys, and Yaa may be Pro. Amino acid amides and methyl esters are also readily hydrolyzed, but rates on arylamides are exceedingly low.. It carries out the reaction L-cysteinylglycine + H2O = L-cysteine + glycine. Its activity is regulated as follows. Oligomerization is required for catalytic activity and is metal-dependent. The type of metal that binds the 2 metal binding sites influences catalytic activity and substrate specificity. In vitro, activated by Co(2+), Mn(2+), Ni(2+), Mg(2+) and Zn(2+) with decreasing strength. Occupancy of the site 2 is essential and sufficient for activating the enzyme but occupation of the 2 sites is necessary for full catalytic activity. Inhibited by fungal metabolite bestatin. Inhibited by Phe-Naphthyl (PNAP). Aminopeptidase which preferentially cleaves leucine residues from the N-terminus of peptides. Also, has some activity towards tryptophan and methionine and to a lesser extent towards phenylalanine. Has very low activity or no activity towards the other amino acids. In addition, cleaves the Cys-Gly dipeptide, probably as part of the glutathione regulation pathway; cleavage only occurs in the presence of Mn(2+). During the asexual blood stage, plays a role in the final step of host hemoglobin catabolism, by cleaving hemoglobin-derived oligopeptides providing a source of amino acids for the parasite protein synthesis and for the maintenance of osmotic homeostasis. During the asexual blood stage, may also play a role during the ring-trophozoite transition. This chain is Leucine aminopeptidase, found in Plasmodium falciparum (isolate 3D7).